The following is a 184-amino-acid chain: Mediator of RNA polymerase II transcription subunit 28 (184 aa).

Residues 77–105 (LLKEENFDLKQEIARKDELIRKHYEKIES) are a coiled coil.

This sequence belongs to the Mediator complex subunit 28 family. As to quaternary structure, component of the Mediator complex.

The protein localises to the nucleus. Functionally, component of the Mediator complex, a coactivator involved in the regulated transcription of nearly all RNA polymerase II-dependent genes. Mediator functions as a bridge to convey information from gene-specific regulatory proteins to the basal RNA polymerase II transcription machinery. Mediator is recruited to promoters by direct interactions with regulatory proteins and serves as a scaffold for the assembly of a functional preinitiation complex with RNA polymerase II and the general transcription factors. This Aedes aegypti (Yellowfever mosquito) protein is Mediator of RNA polymerase II transcription subunit 28 (MED28).